We begin with the raw amino-acid sequence, 574 residues long: MAALTRALPAPLHTSTTEYEEAPAPLPTTPGPQLPKYGQRKGWKPKTAADFNGGGAYPECHVAQYPLDMGKKNKGQGSTLALQVDQDGLVRYDAIAQHGRAPGSRVQSSFKDLVPLANRTDVTESERQMERPDDLSVAETAERTRLALERITHGKIKAAQPKHVPKTNSDATYIRYTPANQSADEGKQRIIKMTEVQEDPLEPPRFKHKKIPRGPAEPPPPVLQSPPRAATAQDQKDWMIPPCISNWKNNKGYTIPLDKRLAADGRGLQDVHINDNFAKFSESLYIADRHIREEVRARAQLQQLLAQKQKTSKEEELRLLAQRAREDRSGLSSSVSGSVAAASASRLPAETGINLGGYGSESGSEEESDEEEEDEEAIRERNIVREEKRREREKEMRMSNMGSEMRAKMLAKEANRDISEKIALGLAKPSASKETLLDSRLFNREALSTGFASEDSYNLYDKPLFAGSSAAAAIYRPAGSSRNDESFGGGTEEGIKEEMSKDRFQLGNATRGFEGAEGVEAREGPVQFEKDTIVALDGSADPFGVEQFMDAARRGGKRTAEDRDEERRKRARDE.

Disordered stretches follow at residues 1 to 46 (MAAL…WKPK), 203 to 234 (PPRF…TAQD), 350 to 406 (ETGI…SEMR), 478 to 503 (AGSS…SKDR), and 549 to 574 (MDAA…ARDE). Pro residues-rich tracts occupy residues 24–33 (APLPTTPGPQ) and 215–224 (PAEPPPPVLQ). Acidic residues predominate over residues 363–377 (GSEEESDEEEEDEEA). 3 stretches are compositionally biased toward basic and acidic residues: residues 378 to 397 (IRER…KEMR), 493 to 503 (EGIKEEMSKDR), and 558 to 574 (RTAE…ARDE).

This sequence belongs to the SNW family. As to quaternary structure, associated with the spliceosome.

It localises to the nucleus. Involved in pre-mRNA splicing. In Cryptococcus neoformans var. neoformans serotype D (strain JEC21 / ATCC MYA-565) (Filobasidiella neoformans), this protein is Pre-mRNA-processing protein 45 (PRP45).